Consider the following 215-residue polypeptide: 3-demethoxyubiquinol 3-hydroxylase (215 aa).

Fe cation is bound by residues glutamate 64, glutamate 94, histidine 97, glutamate 146, glutamate 178, and histidine 181.

Belongs to the COQ7 family. Fe cation is required as a cofactor.

The protein localises to the cell membrane. The enzyme catalyses a 5-methoxy-2-methyl-3-(all-trans-polyprenyl)benzene-1,4-diol + AH2 + O2 = a 3-demethylubiquinol + A + H2O. It participates in cofactor biosynthesis; ubiquinone biosynthesis. Functionally, catalyzes the hydroxylation of 2-nonaprenyl-3-methyl-6-methoxy-1,4-benzoquinol during ubiquinone biosynthesis. This is 3-demethoxyubiquinol 3-hydroxylase from Pseudomonas putida (strain GB-1).